We begin with the raw amino-acid sequence, 128 residues long: Glycine cleavage system H protein (128 aa).

In terms of domain architecture, Lipoyl-binding spans 22 to 104; the sequence is AIVVGITDFA…YEEGWMITIE (83 aa). Lysine 63 is subject to N6-lipoyllysine.

The protein belongs to the GcvH family. As to quaternary structure, the glycine cleavage system is composed of four proteins: P, T, L and H. The cofactor is (R)-lipoate.

In terms of biological role, the glycine cleavage system catalyzes the degradation of glycine. The H protein shuttles the methylamine group of glycine from the P protein to the T protein. The polypeptide is Glycine cleavage system H protein (Anaeromyxobacter dehalogenans (strain 2CP-1 / ATCC BAA-258)).